We begin with the raw amino-acid sequence, 702 residues long: Vertnin (702 aa).

Residues 562 to 625 (VPTLGKGGQE…QGQPHSGPLL (64 aa)) form a disordered region. A compositionally biased stretch (basic and acidic residues) spans 570–582 (QEAEEKQEKEAGR).

The protein belongs to the vertnin family.

It is found in the nucleus. Its function is as follows. Acts as a transcription factor that regulates development of thoracic vertebrae. This chain is Vertnin, found in Homo sapiens (Human).